A 288-amino-acid polypeptide reads, in one-letter code: Adenylate kinase (288 aa).

Position 65-70 (65-70 (GVGKGT)) interacts with ATP. Residues 85–114 (ATGDLVRDELKSSGPLSKQLAEIVNQGKLV) are NMP. Residues Thr86, Arg91, 112–114 (KLV), 142–145 (GFPR), and Gln149 contribute to the AMP site. The interval 178–226 (GRRICSECGKNFNVASIDVAGENGAPRISMARLNPPFTVCFKLITRADD) is LID. Residue Arg179 coordinates ATP. Positions 223 and 234 each coordinate AMP. Residue Gly262 coordinates ATP.

It belongs to the adenylate kinase family. In terms of assembly, monomer.

It localises to the cytoplasm. The catalysed reaction is AMP + ATP = 2 ADP. In terms of biological role, catalyzes the reversible transfer of the terminal phosphate group between ATP and AMP. Plays an important role in cellular energy homeostasis and in adenine nucleotide metabolism. This chain is Adenylate kinase (ADK), found in Solanum tuberosum (Potato).